The chain runs to 930 residues: Beta-mannosidase A (930 aa).

The N-terminal stretch at 1 to 21 is a signal peptide; sequence MHVKAETVLALLTPGLPSVVG. 5 N-linked (GlcNAc...) asparagine glycosylation sites follow: Asn-62, Asn-246, Asn-281, Asn-315, and Asn-346. Glu-478 functions as the Proton donor in the catalytic mechanism. Residues Asn-536, Asn-607, Asn-630, Asn-657, Asn-737, Asn-760, Asn-782, Asn-789, Asn-797, Asn-823, and Asn-909 are each glycosylated (N-linked (GlcNAc...) asparagine).

The protein belongs to the glycosyl hydrolase 2 family. Beta-mannosidase A subfamily. As to quaternary structure, homodimer.

The protein resides in the secreted. The enzyme catalyses Hydrolysis of terminal, non-reducing beta-D-mannose residues in beta-D-mannosides.. It participates in glycan metabolism; N-glycan degradation. Exoglycosidase that cleaves the single beta-linked mannose residue from the non-reducing end of beta-mannosidic oligosaccharides of various complexity and length. Involved in the degradation of polymeric mannan and galactomannan. This is Beta-mannosidase A (mndA) from Neosartorya fischeri (strain ATCC 1020 / DSM 3700 / CBS 544.65 / FGSC A1164 / JCM 1740 / NRRL 181 / WB 181) (Aspergillus fischerianus).